Here is a 518-residue protein sequence, read N- to C-terminus: Zinc finger protein 776 (518 aa).

Residues 14-89 (VTFEDVAVNF…HWTGVCTKKV (76 aa)) form the KRAB domain. Residues K171, K196, K220, and K247 each participate in a glycyl lysine isopeptide (Lys-Gly) (interchain with G-Cter in SUMO2) cross-link. The C2H2-type 1; degenerate zinc-finger motif lies at 208–230 (YICGESTIPFSNKHSLVLHQRLL). The segment at 236 to 258 (YVCSDSGKFTSKSNSFNNHQGVR) adopts a C2H2-type 2; degenerate zinc-finger fold. C2H2-type zinc fingers lie at residues 264–286 (YQCG…QRVH), 292–314 (YECG…QRVH), 320–342 (YECD…QRVH), 348–370 (YQCG…QRVH), 376–398 (FECT…QRVH), 404–426 (YECK…QRVH), and 432–454 (YECR…QQIH). The C2H2-type 10; degenerate zinc-finger motif lies at 460-482 (HECGECGKCFHQKGSLIRHQQIH). A C2H2-type 11 zinc finger spans residues 488–510 (HECGECGKCFRQKGNLIKHQRVH).

This sequence belongs to the krueppel C2H2-type zinc-finger protein family.

The protein localises to the nucleus. May be involved in transcriptional regulation. The polypeptide is Zinc finger protein 776 (ZNF776) (Homo sapiens (Human)).